The sequence spans 455 residues: Histone chaperone RTT106 (455 aa).

Serine 2 is modified (N-acetylserine). The dimeric region stretch occupies residues 2–67 (SKLFLDELPE…SSDLLKTDEI (66 aa)). PH domains follow at residues 68 to 200 (SETN…GFKI) and 217 to 301 (INSF…VKRK). Positions 68–301 (SETNTIFKLE…AKIDDYVKRK (234 aa)) are double PH domain. The segment covering 305-314 (DKSMSEELKA) has biased composition (basic and acidic residues). The segment at 305-455 (DKSMSEELKA…DEDGSGVEYD (151 aa)) is disordered. Residues 319 to 339 (KGQATDGTADQPSILQEATRQ) show a composition bias toward polar residues. 2 stretches are compositionally biased toward acidic residues: residues 350–366 (SDDD…ESDL) and 376–395 (DGAE…DEEE). Polar residues predominate over residues 402-418 (ALNRDNSFASINGQPEQ). A phosphoserine mark is found at serine 408 and serine 411. Residues 420–429 (LQYKEFKEPL) show a composition bias toward basic and acidic residues. Residues 430–455 (ELEDIPIEIDNDDDEDDEDGSGVEYD) show a composition bias toward acidic residues. At serine 450 the chain carries Phosphoserine.

Belongs to the RTT106 family. In terms of assembly, homodimers (via the N-terminal domain). Interacts with the SWI/SNF complex. Interacts with the RSC complex. Interacts with the HIR complex. Interacts with the CAF-1 complex. Interacts with RLF2. Interacts with SIR4. Interacts with YTA7. Interacts with CAC2. Interacts with HPC2. Interacts with HIR2. Interacts with MSI1. Interacts with HIR1. Interacts with histone H3. Interacts with histone H4.

The protein resides in the nucleus. It localises to the chromosome. Functionally, histones H3 and H4 chaperone involved in the nucleosome formation and heterochromatin silencing. Required for the deposition of H3K56ac-carrying H3-H4 complex onto newly-replicated DNA. Plays a role in the transcriptional regulation of the cell-cycle dependent histone genes by directly recruiting the SWI/SNF and RSC chromatin remodeling complexes to the histone genes in a cell cycle dependent manner. In cooperation with HIR and ASF1, creates a repressive structure at the core histone gene promoter and contributes to their repression outside of S phase. Involved in regulation of Ty1 transposition. This is Histone chaperone RTT106 from Saccharomyces cerevisiae (strain ATCC 204508 / S288c) (Baker's yeast).